Consider the following 495-residue polypeptide: Probable cytosol aminopeptidase (495 aa).

Residues Lys-261 and Asp-266 each coordinate Mn(2+). Lys-273 is an active-site residue. Positions 284, 343, and 345 each coordinate Mn(2+). Arg-347 is a catalytic residue.

It belongs to the peptidase M17 family. Mn(2+) is required as a cofactor.

It is found in the cytoplasm. It catalyses the reaction Release of an N-terminal amino acid, Xaa-|-Yaa-, in which Xaa is preferably Leu, but may be other amino acids including Pro although not Arg or Lys, and Yaa may be Pro. Amino acid amides and methyl esters are also readily hydrolyzed, but rates on arylamides are exceedingly low.. The catalysed reaction is Release of an N-terminal amino acid, preferentially leucine, but not glutamic or aspartic acids.. Its function is as follows. Presumably involved in the processing and regular turnover of intracellular proteins. Catalyzes the removal of unsubstituted N-terminal amino acids from various peptides. The polypeptide is Probable cytosol aminopeptidase (Chelativorans sp. (strain BNC1)).